The chain runs to 55 residues: MNIPKTCFQIHNKIQVQNYLIRINLNIFLIYHFSPIYCPYLFLFTVFFNSLINLI.

A helical transmembrane segment spans residues 27 to 47; that stretch reads IFLIYHFSPIYCPYLFLFTVF.

It is found in the membrane. This is an uncharacterized protein from Acheta domesticus (House cricket).